The primary structure comprises 402 residues: Argininosuccinate synthase (402 aa).

9–17 (AYSGGLDTS) serves as a coordination point for ATP. Y86 lines the L-citrulline pocket. Position 116 (G116) interacts with ATP. The L-aspartate site is built by T118, N122, and D123. N122 is an L-citrulline binding site. L-citrulline-binding residues include R126, S174, S183, E259, and Y271.

This sequence belongs to the argininosuccinate synthase family. Type 1 subfamily. In terms of assembly, homotetramer.

It localises to the cytoplasm. It catalyses the reaction L-citrulline + L-aspartate + ATP = 2-(N(omega)-L-arginino)succinate + AMP + diphosphate + H(+). It functions in the pathway amino-acid biosynthesis; L-arginine biosynthesis; L-arginine from L-ornithine and carbamoyl phosphate: step 2/3. The sequence is that of Argininosuccinate synthase from Anoxybacillus flavithermus (strain DSM 21510 / WK1).